The sequence spans 145 residues: Large ribosomal subunit protein uL15 (145 aa).

Residues 1-11 (MELHSLKSTPG) are compositionally biased toward polar residues. Positions 1-48 (MELHSLKSTPGSRKEKHRKGRGHAAGKGKQAGKGQSGQRKRSKVRLGF) are disordered. The span at 14-26 (KEKHRKGRGHAAG) shows a compositional bias: basic residues.

This sequence belongs to the universal ribosomal protein uL15 family. As to quaternary structure, part of the 50S ribosomal subunit.

Binds to the 23S rRNA. The chain is Large ribosomal subunit protein uL15 from Mycoplasmopsis pulmonis (strain UAB CTIP) (Mycoplasma pulmonis).